The following is a 219-amino-acid chain: Small ribosomal subunit protein uS3 (219 aa).

Residues 38–106 (IRTYLKKKLY…KLNLEIKEIK (69 aa)) enclose the KH type-2 domain.

This sequence belongs to the universal ribosomal protein uS3 family. In terms of assembly, part of the 30S ribosomal subunit. Forms a tight complex with proteins S10 and S14.

Functionally, binds the lower part of the 30S subunit head. Binds mRNA in the 70S ribosome, positioning it for translation. This Lachnoclostridium phytofermentans (strain ATCC 700394 / DSM 18823 / ISDg) (Clostridium phytofermentans) protein is Small ribosomal subunit protein uS3.